The primary structure comprises 137 residues: Nucleoside diphosphate kinase (137 aa).

Positions 9, 57, 85, 91, 102, and 112 each coordinate ATP. Catalysis depends on histidine 115, which acts as the Pros-phosphohistidine intermediate.

The protein belongs to the NDK family. As to quaternary structure, homotetramer. Mg(2+) serves as cofactor.

Its subcellular location is the cytoplasm. The enzyme catalyses a 2'-deoxyribonucleoside 5'-diphosphate + ATP = a 2'-deoxyribonucleoside 5'-triphosphate + ADP. It carries out the reaction a ribonucleoside 5'-diphosphate + ATP = a ribonucleoside 5'-triphosphate + ADP. Functionally, major role in the synthesis of nucleoside triphosphates other than ATP. The ATP gamma phosphate is transferred to the NDP beta phosphate via a ping-pong mechanism, using a phosphorylated active-site intermediate. This Leptospira interrogans serogroup Icterohaemorrhagiae serovar Lai (strain 56601) protein is Nucleoside diphosphate kinase.